The following is a 190-amino-acid chain: Elongation factor P 2 (190 aa).

This sequence belongs to the elongation factor P family.

The protein localises to the cytoplasm. Its pathway is protein biosynthesis; polypeptide chain elongation. In terms of biological role, involved in peptide bond synthesis. Stimulates efficient translation and peptide-bond synthesis on native or reconstituted 70S ribosomes in vitro. Probably functions indirectly by altering the affinity of the ribosome for aminoacyl-tRNA, thus increasing their reactivity as acceptors for peptidyl transferase. The polypeptide is Elongation factor P 2 (efp2) (Chlamydia trachomatis serovar D (strain ATCC VR-885 / DSM 19411 / UW-3/Cx)).